A 198-amino-acid chain; its full sequence is Endoribonuclease YbeY (198 aa).

Zn(2+) contacts are provided by His156, His160, and His166.

It belongs to the endoribonuclease YbeY family. Zn(2+) is required as a cofactor.

The protein resides in the cytoplasm. Single strand-specific metallo-endoribonuclease involved in late-stage 70S ribosome quality control and in maturation of the 3' terminus of the 16S rRNA. The chain is Endoribonuclease YbeY from Cupriavidus necator (strain ATCC 17699 / DSM 428 / KCTC 22496 / NCIMB 10442 / H16 / Stanier 337) (Ralstonia eutropha).